The sequence spans 711 residues: DNA topoisomerase 3 (711 aa).

A Toprim domain is found at 2–135; sequence KSLILAEKPS…IRRLWISSVT (134 aa). The Mg(2+) site is built by Glu-8 and Asp-104. The 429-residue stretch at 152 to 580 folds into the Topo IA-type catalytic domain; it reads YNDLYYAALA…EMKDFTKDVV (429 aa). The tract at residues 186 to 191 is interaction with DNA; it reads SLGRVQ. Catalysis depends on Tyr-305, which acts as the O-(5'-phospho-DNA)-tyrosine intermediate. Residues 691–711 form a disordered region; sequence MNKNEGLDNNPFKDALKNLNL.

Belongs to the type IA topoisomerase family. Requires Mg(2+) as cofactor.

The enzyme catalyses ATP-independent breakage of single-stranded DNA, followed by passage and rejoining.. Releases the supercoiling and torsional tension of DNA, which is introduced during the DNA replication and transcription, by transiently cleaving and rejoining one strand of the DNA duplex. Introduces a single-strand break via transesterification at a target site in duplex DNA. The scissile phosphodiester is attacked by the catalytic tyrosine of the enzyme, resulting in the formation of a DNA-(5'-phosphotyrosyl)-enzyme intermediate and the expulsion of a 3'-OH DNA strand. The free DNA strand then undergoes passage around the unbroken strand, thus removing DNA supercoils. Finally, in the religation step, the DNA 3'-OH attacks the covalent intermediate to expel the active-site tyrosine and restore the DNA phosphodiester backbone. The sequence is that of DNA topoisomerase 3 from Staphylococcus aureus (strain Mu50 / ATCC 700699).